A 390-amino-acid chain; its full sequence is Protein phosphatase methylesterase 1 (390 aa).

A disordered region spans residues 19–50; the sequence is FGLSSLSEDPDESESNSNYFSPTPQPPNELRT. Positions 100–332 constitute an AB hydrolase-1 domain; that stretch reads PIFICHHGAG…NLIIGQMQGK (233 aa). Active-site residues include Ser186, Asp213, and His346.

It belongs to the AB hydrolase superfamily.

The catalysed reaction is [phosphatase 2A protein]-C-terminal L-leucine methyl ester + H2O = [phosphatase 2A protein]-C-terminal L-leucine + methanol + H(+). Functionally, demethylates proteins that have been reversibly carboxymethylated. Demethylates the phosphatase PP2A catalytic subunit. The polypeptide is Protein phosphatase methylesterase 1 (PPE1) (Debaryomyces hansenii (strain ATCC 36239 / CBS 767 / BCRC 21394 / JCM 1990 / NBRC 0083 / IGC 2968) (Yeast)).